A 533-amino-acid chain; its full sequence is MACTTILVGKDASYDGSTIIARNEDSANGEFNPKRFIVVKPEEQPREYKSVISHLTITLPDDPLQYTAVPNADLKEGIWGEAGVNEANVAMSATETLTTNERVLGADPFVEYTPAKGDEPEVPGGIGEEDFLTIVLPYVKTAREGVQRLGALLEEFGTYEMNGVAFSDSNEIWWLETVGGHHWIAKRVPDEAYVTMPNQLGIDEFDLEDALGDQEAHMCSEDLAEFIETNHLDLAVENTTPFNPRDAFGSHSDSDHVYNTPRAWYMQRFLNPYDEVWDGPDADHKPTSDDIPWARQPERKVTIEDIKYVLSSHYQGTPFDPYGQLGDERTRHMYRTIGINRQSQLAVMQIRPYRPQASRAIQWMAYGSNPFNTLVPFFPNVDTTPAYLEDTTTRVTSENFYWANRIIAALCDGAFRSTSNAVERYQEKTGAMGHRLVAATDEQIARLGLTAAEEAAQSAAEEEFEADNVDGDVQPMTPDETIAALRNPEVREILAAANQTMADQLKEETEKLLDSVLYTRSMEMKNGFHMSDF.

Cysteine 3 is an active-site residue.

Belongs to the peptidase C69 family.

It carries out the reaction an L-aminoacyl-L-amino acid + H2O = 2 an L-alpha-amino acid. In terms of biological role, hydrolyzes a wide range of dipeptides. Highest activity against Ala-Gln. This is Dipeptidase from Bifidobacterium longum (strain NCC 2705).